A 304-amino-acid chain; its full sequence is Ribosomal RNA small subunit methyltransferase H (304 aa).

S-adenosyl-L-methionine-binding positions include 37 to 39 (AGH), Asp-57, Phe-79, Asp-100, and His-107.

It belongs to the methyltransferase superfamily. RsmH family.

The protein localises to the cytoplasm. The catalysed reaction is cytidine(1402) in 16S rRNA + S-adenosyl-L-methionine = N(4)-methylcytidine(1402) in 16S rRNA + S-adenosyl-L-homocysteine + H(+). In terms of biological role, specifically methylates the N4 position of cytidine in position 1402 (C1402) of 16S rRNA. In Bacteroides thetaiotaomicron (strain ATCC 29148 / DSM 2079 / JCM 5827 / CCUG 10774 / NCTC 10582 / VPI-5482 / E50), this protein is Ribosomal RNA small subunit methyltransferase H.